A 272-amino-acid chain; its full sequence is Regulatory protein RecX (272 aa).

It belongs to the RecX family.

It is found in the cytoplasm. Modulates RecA activity. In Oceanobacillus iheyensis (strain DSM 14371 / CIP 107618 / JCM 11309 / KCTC 3954 / HTE831), this protein is Regulatory protein RecX.